Here is a 328-residue protein sequence, read N- to C-terminus: Endo-beta-1,4-glucanase B (328 aa).

A signal peptide spans 1–17 (MKVNTLLVAVAAGTAMA). Asn-95 is a glycosylation site (N-linked (GlcNAc...) asparagine). The Proton donor role is filled by Glu-155. Residue Glu-262 is the Nucleophile of the active site.

This sequence belongs to the glycosyl hydrolase 5 (cellulase A) family.

It is found in the secreted. It catalyses the reaction Endohydrolysis of (1-&gt;4)-beta-D-glucosidic linkages in cellulose, lichenin and cereal beta-D-glucans.. Has endoglucanase activity on substrates containing beta-1,4 glycosidic bonds, like in carboxymethylcellulose (CMC), hydroxyethylcellulose (HEC) and beta-glucan. Involved in the degradation of complex natural cellulosic substrates. The chain is Endo-beta-1,4-glucanase B (eglB) from Emericella nidulans (strain FGSC A4 / ATCC 38163 / CBS 112.46 / NRRL 194 / M139) (Aspergillus nidulans).